A 345-amino-acid polypeptide reads, in one-letter code: Putative RING-H2 finger protein ATL36 (345 aa).

The signal sequence occupies residues 1-31 (MNIFTRYHLPRVVSGVILPLFLFHLLPYVTC). Residues 50-70 (SIIAIVVLAIFISLGMVSCCL) form a helical membrane-spanning segment. The RING-type; atypical zinc finger occupies 123–165 (CAICLSEFEDQETLRWMPPCSHTFHANCIDVWLSSWSTCPVCR). Ser-264 is subject to Phosphoserine.

Belongs to the RING-type zinc finger family. ATL subfamily.

Its subcellular location is the membrane. It carries out the reaction S-ubiquitinyl-[E2 ubiquitin-conjugating enzyme]-L-cysteine + [acceptor protein]-L-lysine = [E2 ubiquitin-conjugating enzyme]-L-cysteine + N(6)-ubiquitinyl-[acceptor protein]-L-lysine.. It participates in protein modification; protein ubiquitination. This chain is Putative RING-H2 finger protein ATL36 (ATL36), found in Arabidopsis thaliana (Mouse-ear cress).